Here is a 73-residue protein sequence, read N- to C-terminus: U-scoloptoxin(15)-Sm2a (73 aa).

The first 20 residues, 1–20 (MKFYIVFCLFVVLLINFAAA), serve as a signal peptide directing secretion. Disulfide bonds link Cys-39/Cys-66 and Cys-43/Cys-68.

This sequence belongs to the scoloptoxin-15 family. Expressed by the venom gland.

The protein localises to the secreted. Activity unknown, even that a lot of targets (Kv, Nav, Cav) have been tested and activities on insects and mice have been tested. The sequence is that of U-scoloptoxin(15)-Sm2a from Scolopendra morsitans (Tanzanian blue ringleg centipede).